The primary structure comprises 64 residues: Alpha-conotoxin SI (64 aa).

The signal sequence occupies residues 1–21 (MGMRMMFTVFLLVVLATTVVS). A propeptide spanning residues 22-49 (FPSDRASDGRDDEAKDERSDMHESDRKE) is cleaved from the precursor. Positions 23–47 (PSDRASDGRDDEAKDERSDMHESDR) are disordered. Over residues 26-47 (RASDGRDDEAKDERSDMHESDR) the composition is skewed to basic and acidic residues. 2 disulfides stabilise this stretch: cysteine 51–cysteine 56 and cysteine 52–cysteine 62. At cysteine 62 the chain carries Cysteine amide.

It belongs to the conotoxin A superfamily. As to expression, expressed by the venom duct.

Its subcellular location is the secreted. Its function is as follows. Alpha-conotoxins act on postsynaptic membranes, they bind to the nicotinic acetylcholine receptors (nAChR) and thus inhibit them. Is active on muscle nAChR (IC(50)=113 nM on adult subtype (alpha-1-beta-1-gamma-delta/CHRNA1-CHRNB1-CHRNG-CHRND) and IC(50)=142 nM on fetal subtype (alpha-1-beta-1-delta-epsilon/CHRNA1-CHRNB1-CHRND-CHRNE)). On mice muscle receptors, its higher affinity site is the alpha/delta nAChR subunit interface. On Torpedo receptors, it does not distinguish between alpha/delta and alpha/gamma acetylcholine-binding sites. In vivo, causes paralysis followed by death when injected into goldfish. In contrast, has no effect on mice, when similar doses are intraperitoneally or intracerebrally injected. This is Alpha-conotoxin SI from Conus striatus (Striated cone).